The primary structure comprises 162 residues: Interleukin-2 (162 aa).

A signal peptide spans 1 to 20 (MYKIQLLSCIALTLALVANG). O-linked (GalNAc...) threonine glycosylation occurs at Thr-23. The N-linked (GlcNAc...) asparagine glycan is linked to Asn-70. The cysteines at positions 79 and 134 are disulfide-linked.

Belongs to the IL-2 family.

It localises to the secreted. Functionally, cytokine produced by activated CD4-positive helper T-cells and to a lesser extend activated CD8-positive T-cells and natural killer (NK) cells that plays pivotal roles in the immune response and tolerance. Binds to a receptor complex composed of either the high-affinity trimeric IL-2R (IL2RA/CD25, IL2RB/CD122 and IL2RG/CD132) or the low-affinity dimeric IL-2R (IL2RB and IL2RG). Interaction with the receptor leads to oligomerization and conformation changes in the IL-2R subunits resulting in downstream signaling starting with phosphorylation of JAK1 and JAK3. In turn, JAK1 and JAK3 phosphorylate the receptor to form a docking site leading to the phosphorylation of several substrates including STAT5. This process leads to activation of several pathways including STAT, phosphoinositide-3-kinase/PI3K and mitogen-activated protein kinase/MAPK pathways. Functions as a T-cell growth factor and can increase NK-cell cytolytic activity as well. Promotes strong proliferation of activated B-cells and subsequently immunoglobulin production. Plays a pivotal role in regulating the adaptive immune system by controlling the survival and proliferation of regulatory T-cells, which are required for the maintenance of immune tolerance. Moreover, participates in the differentiation and homeostasis of effector T-cell subsets, including Th1, Th2, Th17 as well as memory CD8-positive T-cells. This Cervus elaphus (Red deer) protein is Interleukin-2 (IL2).